The chain runs to 424 residues: Argininosuccinate synthase (424 aa).

ATP-binding positions include 9 to 17 (AYSGGLDTS) and A35. The L-citrulline site is built by Y86 and S91. 114 to 122 (SHGATGKGN) lines the ATP pocket. L-aspartate is bound by residues T118, N122, and D123. Residue N122 coordinates L-citrulline. L-citrulline-binding residues include R126, S179, S188, E269, and Y281.

The protein belongs to the argininosuccinate synthase family. Homotetramer.

It catalyses the reaction L-citrulline + L-aspartate + ATP = 2-(N(omega)-L-arginino)succinate + AMP + diphosphate + H(+). It participates in amino-acid biosynthesis; L-arginine biosynthesis; L-arginine from L-ornithine and carbamoyl phosphate: step 2/3. It functions in the pathway nitrogen metabolism; urea cycle; (N(omega)-L-arginino)succinate from L-aspartate and L-citrulline: step 1/1. The polypeptide is Argininosuccinate synthase (Anopheles gambiae (African malaria mosquito)).